We begin with the raw amino-acid sequence, 198 residues long: dITP/XTP pyrophosphatase (198 aa).

8–13 (TKNKGK) is a substrate binding site. D69 (proton acceptor) is an active-site residue. D69 serves as a coordination point for Mg(2+). Substrate is bound by residues S70, 152 to 155 (FGYD), K175, and 180 to 181 (HR).

Belongs to the HAM1 NTPase family. As to quaternary structure, homodimer. Mg(2+) serves as cofactor.

The catalysed reaction is XTP + H2O = XMP + diphosphate + H(+). It catalyses the reaction dITP + H2O = dIMP + diphosphate + H(+). It carries out the reaction ITP + H2O = IMP + diphosphate + H(+). Functionally, pyrophosphatase that catalyzes the hydrolysis of nucleoside triphosphates to their monophosphate derivatives, with a high preference for the non-canonical purine nucleotides XTP (xanthosine triphosphate), dITP (deoxyinosine triphosphate) and ITP. Seems to function as a house-cleaning enzyme that removes non-canonical purine nucleotides from the nucleotide pool, thus preventing their incorporation into DNA/RNA and avoiding chromosomal lesions. The chain is dITP/XTP pyrophosphatase from Shouchella clausii (strain KSM-K16) (Alkalihalobacillus clausii).